Consider the following 122-residue polypeptide: Large ribosomal subunit protein uL14c (122 aa).

It belongs to the universal ribosomal protein uL14 family. As to quaternary structure, part of the 50S ribosomal subunit.

It is found in the plastid. The protein localises to the chloroplast. Binds to 23S rRNA. The protein is Large ribosomal subunit protein uL14c of Populus alba (White poplar).